Consider the following 387-residue polypeptide: tRNA-specific 2-thiouridylase MnmA (387 aa).

ATP is bound by residues 6 to 13 and Leu-32; that span reads AMSGGVDS. Catalysis depends on Cys-101, which acts as the Nucleophile. An intrachain disulfide couples Cys-101 to Cys-199. An ATP-binding site is contributed by Gly-125. The segment at 148 to 150 is interaction with tRNA; the sequence is KDQ. Cys-199 functions as the Cysteine persulfide intermediate in the catalytic mechanism.

This sequence belongs to the MnmA/TRMU family.

It is found in the cytoplasm. The enzyme catalyses S-sulfanyl-L-cysteinyl-[protein] + uridine(34) in tRNA + AH2 + ATP = 2-thiouridine(34) in tRNA + L-cysteinyl-[protein] + A + AMP + diphosphate + H(+). Catalyzes the 2-thiolation of uridine at the wobble position (U34) of tRNA, leading to the formation of s(2)U34. The polypeptide is tRNA-specific 2-thiouridylase MnmA (Clavibacter michiganensis subsp. michiganensis (strain NCPPB 382)).